Here is a 279-residue protein sequence, read N- to C-terminus: Protein gustavus (279 aa).

Positions 36-233 (PARIDILLDM…ITMRYIGGLD (198 aa)) constitute a B30.2/SPRY domain. The 46-residue stretch at 234–279 (PEPLPLMDLCRRTIRQKIGRTNLEEHIQQLQLPLSMKTYLLYKNRR) folds into the SOCS box domain. Positions 236–279 (PLPLMDLCRRTIRQKIGRTNLEEHIQQLQLPLSMKTYLLYKNRR) are involved in binding to the Elongin BC complex.

The protein belongs to the SPSB family. As to quaternary structure, interacts (via B30.2/SPRY domain) with vas; this interaction may be necessary for the transport of vas to the posterior pole of the oocyte. Interacts with Cul-5. May associate with the Elongin BC complex composed of Elongin-B and Elongin-C. In terms of tissue distribution, expressed in ovaries, primarily in nurse cells and oocytes (at protein level).

It localises to the cytoplasm. The protein localises to the nucleus. Functionally, involved in the localization of vas to the posterior pole of the oocyte. Required maternally in the germ line for efficient primordial germ cell formation. This is Protein gustavus (gus) from Drosophila melanogaster (Fruit fly).